Consider the following 128-residue polypeptide: Aspartate 1-decarboxylase (128 aa).

Ser-25 serves as the catalytic Schiff-base intermediate with substrate; via pyruvic acid. Pyruvic acid (Ser) is present on Ser-25. Thr-57 is a substrate binding site. Catalysis depends on Tyr-58, which acts as the Proton donor. Position 73 to 75 (73 to 75) interacts with substrate; the sequence is GAA.

It belongs to the PanD family. As to quaternary structure, heterooctamer of four alpha and four beta subunits. Pyruvate is required as a cofactor. Post-translationally, is synthesized initially as an inactive proenzyme, which is activated by self-cleavage at a specific serine bond to produce a beta-subunit with a hydroxyl group at its C-terminus and an alpha-subunit with a pyruvoyl group at its N-terminus.

It localises to the cytoplasm. It carries out the reaction L-aspartate + H(+) = beta-alanine + CO2. It functions in the pathway cofactor biosynthesis; (R)-pantothenate biosynthesis; beta-alanine from L-aspartate: step 1/1. Catalyzes the pyruvoyl-dependent decarboxylation of aspartate to produce beta-alanine. This chain is Aspartate 1-decarboxylase, found in Ruminiclostridium cellulolyticum (strain ATCC 35319 / DSM 5812 / JCM 6584 / H10) (Clostridium cellulolyticum).